A 103-amino-acid chain; its full sequence is UPF0145 protein Amet_0532 (103 aa).

This sequence belongs to the UPF0145 family.

The polypeptide is UPF0145 protein Amet_0532 (Alkaliphilus metalliredigens (strain QYMF)).